The chain runs to 311 residues: Putative prophage capsid protein YqbE (311 aa).

The protein belongs to the encapsulin family. Family 3 subfamily.

Possibly a prophage capsid protein. This is Putative prophage capsid protein YqbE (yqbE) from Bacillus subtilis (strain 168).